Here is a 549-residue protein sequence, read N- to C-terminus: Myotubularin-related protein 9 (549 aa).

N-acetylmethionine is present on Met-1. The GRAM domain maps to 4-99 (AELIKTPRVD…LNIASSIEAL (96 aa)). In terms of domain architecture, Myotubularin phosphatase spans 123 to 498 (GWHSFLPEQE…QSLQLWEGIF (376 aa)). The stretch at 508-542 (LDEAYEEMVNIIEYNKELQAKVNLLRRQLAELETE) forms a coiled coil. Ser-548 is subject to Phosphoserine.

It belongs to the protein-tyrosine phosphatase family. Non-receptor class myotubularin subfamily. Homodimer. Heterodimer (via C-terminus) with lipid phosphatase MTMR6 (via C-terminus). Heterodimer (via coiled coil domain) with lipid phosphatase MTMR7 (via C-terminus). Heterodimer with lipid phosphatase MTMR8.

It localises to the cytoplasm. Its subcellular location is the cell projection. It is found in the ruffle membrane. The protein localises to the perinuclear region. The protein resides in the endoplasmic reticulum. Functionally, acts as an adapter for myotubularin-related phosphatases. Increases lipid phosphatase MTMR6 catalytic activity, specifically towards phosphatidylinositol 3,5-bisphosphate, and MTMR6 binding affinity for phosphorylated phosphatidylinositols. Positively regulates lipid phosphatase MTMR7 catalytic activity. Increases MTMR8 catalytic activity towards phosphatidylinositol 3-phosphate. The formation of the MTMR6-MTMR9 complex, stabilizes both MTMR6 and MTMR9 protein levels. Stabilizes MTMR8 protein levels. Plays a role in the late stages of macropinocytosis possibly by regulating MTMR6-mediated dephosphorylation of phosphatidylinositol 3-phosphate in membrane ruffles. Negatively regulates autophagy, in part via its association with MTMR8. Negatively regulates DNA damage-induced apoptosis, in part via its association with MTMR6. Does not bind mono-, di- and tri-phosphorylated phosphatidylinositols, phosphatidic acid and phosphatidylserine. This Bos taurus (Bovine) protein is Myotubularin-related protein 9 (MTMR9).